We begin with the raw amino-acid sequence, 104 residues long: Large ribosomal subunit protein uL23 (104 aa).

Belongs to the universal ribosomal protein uL23 family. As to quaternary structure, part of the 50S ribosomal subunit. Contacts protein L29, and trigger factor when it is bound to the ribosome.

Functionally, one of the early assembly proteins it binds 23S rRNA. One of the proteins that surrounds the polypeptide exit tunnel on the outside of the ribosome. Forms the main docking site for trigger factor binding to the ribosome. The protein is Large ribosomal subunit protein uL23 of Polynucleobacter asymbioticus (strain DSM 18221 / CIP 109841 / QLW-P1DMWA-1) (Polynucleobacter necessarius subsp. asymbioticus).